A 372-amino-acid chain; its full sequence is 4-hydroxy-3-methylbut-2-en-1-yl diphosphate synthase (flavodoxin) (372 aa).

[4Fe-4S] cluster contacts are provided by cysteine 270, cysteine 273, cysteine 305, and glutamate 312.

This sequence belongs to the IspG family. The cofactor is [4Fe-4S] cluster.

It catalyses the reaction (2E)-4-hydroxy-3-methylbut-2-enyl diphosphate + oxidized [flavodoxin] + H2O + 2 H(+) = 2-C-methyl-D-erythritol 2,4-cyclic diphosphate + reduced [flavodoxin]. It participates in isoprenoid biosynthesis; isopentenyl diphosphate biosynthesis via DXP pathway; isopentenyl diphosphate from 1-deoxy-D-xylulose 5-phosphate: step 5/6. Converts 2C-methyl-D-erythritol 2,4-cyclodiphosphate (ME-2,4cPP) into 1-hydroxy-2-methyl-2-(E)-butenyl 4-diphosphate. This Enterobacter sp. (strain 638) protein is 4-hydroxy-3-methylbut-2-en-1-yl diphosphate synthase (flavodoxin).